The primary structure comprises 179 residues: Probable protein archease (179 aa).

Ca(2+) is bound by residues Asp-55, Asp-178, and Val-179.

This sequence belongs to the archease family.

Its function is as follows. Activates the tRNA-splicing ligase complex by facilitating the enzymatic turnover of catalytic subunit RtcB. Acts by promoting the guanylylation of RtcB, a key intermediate step in tRNA ligation. Can also alter the NTP specificity of RtcB such that ATP, dGTP or ITP is used efficiently. In Mycobacterium tuberculosis (strain CDC 1551 / Oshkosh), this protein is Probable protein archease.